Reading from the N-terminus, the 335-residue chain is uncharacterized protein (335 aa).

This is an uncharacterized protein from Methanocaldococcus jannaschii (strain ATCC 43067 / DSM 2661 / JAL-1 / JCM 10045 / NBRC 100440) (Methanococcus jannaschii).